The primary structure comprises 156 residues: Arginine repressor (156 aa).

This sequence belongs to the ArgR family.

It is found in the cytoplasm. It participates in amino-acid biosynthesis; L-arginine biosynthesis [regulation]. Regulates arginine biosynthesis genes. The sequence is that of Arginine repressor from Shewanella sp. (strain ANA-3).